The chain runs to 370 residues: F-box protein At3g20690 (370 aa).

Residues 1–45 (MMMSDLPHDLVEEILSRLPLISLKAMRSTCKTWNVLSKHRSFANK) form the F-box domain.

This chain is F-box protein At3g20690, found in Arabidopsis thaliana (Mouse-ear cress).